A 517-amino-acid polypeptide reads, in one-letter code: 3-hydroxyphenylacetate 6-hydroxylase (517 aa).

Position 449 (Cys449) interacts with heme.

Belongs to the cytochrome P450 family.

The enzyme catalyses 3-hydroxyphenylacetate + NADH + O2 + H(+) = homogentisate + NAD(+) + H2O. It catalyses the reaction 3-hydroxyphenylacetate + NADPH + O2 + H(+) = homogentisate + NADP(+) + H2O. It carries out the reaction 3,4-dihydroxyphenylacetate + NADH + O2 + H(+) = 2,4,5-trihydroxyphenylacetate + NAD(+) + H2O. The catalysed reaction is 3,4-dihydroxyphenylacetate + NADPH + O2 + H(+) = 2,4,5-trihydroxyphenylacetate + NADP(+) + H2O. It functions in the pathway aromatic compound metabolism; phenylacetate degradation. Functionally, catalyzes the hydroxylation of 3-hydroxyphenylacetate and 3,4-dihydroxyphenylacetate to 2,5-dihydroxyphenylacetate (homogentisate) and 2,4,5-trihydroxyphenylacetate, respectively. Both of these compounds are used as substrate by homogentisate dioxygenase in the homogentisate pathway. The homogentisate pathway is used to catabolize phenylacetate and use it as a carbon source. Can also catalyze the hydroxylation of phenylacetate to 2-hydroxyphenylacetate at low efficiency to compensate for loss of phacA. In Emericella nidulans (Aspergillus nidulans), this protein is 3-hydroxyphenylacetate 6-hydroxylase (phacB).